The chain runs to 41 residues: Photosystem I reaction center subunit IX (41 aa).

Residues 7-27 (YLSTAPVVATGWFIVTAALLI) traverse the membrane as a helical segment.

This sequence belongs to the PsaJ family.

It is found in the plastid. The protein localises to the chloroplast thylakoid membrane. In terms of biological role, may help in the organization of the PsaE and PsaF subunits. The chain is Photosystem I reaction center subunit IX from Tetradesmus obliquus (Green alga).